Here is a 246-residue protein sequence, read N- to C-terminus: UPF0246 protein stu1967 (246 aa).

The protein belongs to the UPF0246 family.

This Streptococcus thermophilus (strain ATCC BAA-250 / LMG 18311) protein is UPF0246 protein stu1967.